A 577-amino-acid polypeptide reads, in one-letter code: Phosphoenolpyruvate-protein phosphotransferase (577 aa).

Residue His191 is the Tele-phosphohistidine intermediate of the active site. Phosphoenolpyruvate-binding residues include Arg298 and Arg334. Glu435 and Asp459 together coordinate Mg(2+). Residues 458 to 459 and Arg469 contribute to the phosphoenolpyruvate site; that span reads ND. The active-site Proton donor is the Cys506.

Belongs to the PEP-utilizing enzyme family. As to quaternary structure, homodimer. It depends on Mg(2+) as a cofactor.

Its subcellular location is the cytoplasm. The enzyme catalyses L-histidyl-[protein] + phosphoenolpyruvate = N(pros)-phospho-L-histidyl-[protein] + pyruvate. Functionally, general (non sugar-specific) component of the phosphoenolpyruvate-dependent sugar phosphotransferase system (sugar PTS). This major carbohydrate active-transport system catalyzes the phosphorylation of incoming sugar substrates concomitantly with their translocation across the cell membrane. Enzyme I transfers the phosphoryl group from phosphoenolpyruvate (PEP) to the phosphoryl carrier protein (HPr). The chain is Phosphoenolpyruvate-protein phosphotransferase (ptsI) from Streptococcus equinus (Streptococcus bovis).